Reading from the N-terminus, the 77-residue chain is Small nuclear ribonucleoprotein G (77 aa).

Residues 4 to 76 (AGAPDLKKYL…VIMIETLDKM (73 aa)) enclose the Sm domain.

This sequence belongs to the snRNP Sm proteins family. Belongs to the 40S cdc5-associated complex (or cwf complex), a spliceosome sub-complex reminiscent of a late-stage spliceosome composed of the U2, U5 and U6 snRNAs and at least brr2, cdc5, cwf2/prp3, cwf3/syf1, cwf4/syf3, cwf5/ecm2, spp42/cwf6, cwf7/spf27, cwf8, cwf9, cwf10, cwf11, cwf12, prp45/cwf13, cwf14, cwf15, cwf16, cwf17, cwf18, cwf19, cwf20, cwf21, cwf22, cwf23, cwf24, cwf25, cwf26, cyp7/cwf27, cwf28, cwf29/ist3, lea1, msl1, prp5/cwf1, prp10, prp12/sap130, prp17, prp22, sap61, sap62, sap114, sap145, slu7, smb1, smd1, smd3, smf1, smg1 and syf2.

The protein localises to the nucleus. Its subcellular location is the cytoplasm. In terms of biological role, plays a role in pre-mRNA splicing as a core component of the spliceosomal U1, U2, U4 and U5 small nuclear ribonucleoproteins (snRNPs), the building blocks of the spliceosome. In Schizosaccharomyces pombe (strain 972 / ATCC 24843) (Fission yeast), this protein is Small nuclear ribonucleoprotein G (smg1).